Reading from the N-terminus, the 62-residue chain is uncharacterized protein (62 aa).

Residues 38–62 (VKSESDTADSKRSAEAKADEAPAKM) form a disordered region.

This is an uncharacterized protein from Schizosaccharomyces pombe (strain 972 / ATCC 24843) (Fission yeast).